The following is a 696-amino-acid chain: Zinc finger SWIM domain-containing protein 3 (696 aa).

Residues 531-572 form an SWIM-type zinc finger; sequence VDVQLLEDSHQVSKDGCSCSCSFQQWYHLPCRHILALLHTSQ.

The protein is Zinc finger SWIM domain-containing protein 3 (ZSWIM3) of Homo sapiens (Human).